A 367-amino-acid chain; its full sequence is tRNA-specific 2-thiouridylase MnmA (367 aa).

ATP-binding positions include 11–18 (GLSGGVDS) and L37. C99 acts as the Nucleophile in catalysis. The cysteines at positions 99 and 195 are disulfide-linked. G123 is an ATP binding site. The interval 145–147 (KDQ) is interaction with tRNA. The Cysteine persulfide intermediate role is filled by C195. Positions 304 to 305 (RY) are interaction with tRNA.

This sequence belongs to the MnmA/TRMU family.

The protein resides in the cytoplasm. It carries out the reaction S-sulfanyl-L-cysteinyl-[protein] + uridine(34) in tRNA + AH2 + ATP = 2-thiouridine(34) in tRNA + L-cysteinyl-[protein] + A + AMP + diphosphate + H(+). Functionally, catalyzes the 2-thiolation of uridine at the wobble position (U34) of tRNA, leading to the formation of s(2)U34. This Chlorobium luteolum (strain DSM 273 / BCRC 81028 / 2530) (Pelodictyon luteolum) protein is tRNA-specific 2-thiouridylase MnmA.